The primary structure comprises 156 residues: Small ribosomal subunit protein uS7 (156 aa).

It belongs to the universal ribosomal protein uS7 family. As to quaternary structure, part of the 30S ribosomal subunit. Contacts proteins S9 and S11.

One of the primary rRNA binding proteins, it binds directly to 16S rRNA where it nucleates assembly of the head domain of the 30S subunit. Is located at the subunit interface close to the decoding center, probably blocks exit of the E-site tRNA. In Lactobacillus helveticus (strain DPC 4571), this protein is Small ribosomal subunit protein uS7.